Reading from the N-terminus, the 386-residue chain is S-adenosylmethionine synthase (386 aa).

His-16 is an ATP binding site. Asp-18 provides a ligand contact to Mg(2+). Residue Glu-44 participates in K(+) binding. L-methionine is bound by residues Glu-57 and Gln-100. The segment at 100–110 is flexible loop; it reads QSRDIAQGVDR. ATP contacts are provided by residues 165 to 167, Asp-240, 246 to 247, Ala-263, and Lys-267; these read DAK and RK. Residue Asp-240 participates in L-methionine binding. Residue Lys-271 coordinates L-methionine.

The protein belongs to the AdoMet synthase family. Homotetramer; dimer of dimers. Mg(2+) serves as cofactor. K(+) is required as a cofactor.

The protein localises to the cytoplasm. The catalysed reaction is L-methionine + ATP + H2O = S-adenosyl-L-methionine + phosphate + diphosphate. It participates in amino-acid biosynthesis; S-adenosyl-L-methionine biosynthesis; S-adenosyl-L-methionine from L-methionine: step 1/1. In terms of biological role, catalyzes the formation of S-adenosylmethionine (AdoMet) from methionine and ATP. The overall synthetic reaction is composed of two sequential steps, AdoMet formation and the subsequent tripolyphosphate hydrolysis which occurs prior to release of AdoMet from the enzyme. The polypeptide is S-adenosylmethionine synthase (Francisella tularensis subsp. holarctica (strain FTNF002-00 / FTA)).